We begin with the raw amino-acid sequence, 609 residues long: Cationic amino acid transporter 3, mitochondrial (609 aa).

The N-terminal 14 residues, 1 to 14 (MGCLRSLVRRKQFD), are a transit peptide targeting the mitochondrion. 14 helical membrane passes run 38-58 (LIAI…VGTV), 66-86 (ALAL…FCYA), 104-124 (ICIG…EYTI), 161-181 (IVVD…CCLG), 190-210 (GIVT…GSYL), 226-246 (FPYG…AYIG), 270-290 (ISLL…VGLV), 314-334 (AYLI…GSIL), 361-381 (QVPI…AFFM), 388-408 (GMVS…LLIV), 474-494 (IMFT…FLLP), 499-519 (YSLC…LICI), 534-554 (FICP…MYLL), and 558-578 (GAAT…VYIF).

It belongs to the amino acid-polyamine-organocation (APC) superfamily. Cationic amino acid transporter (CAT) (TC 2.A.3.3) family. In terms of tissue distribution, expressed in roots, stems, flowers, and leaves.

It localises to the mitochondrion membrane. Permease involved in the transport of the cationic neutral or acidic amino acids. The chain is Cationic amino acid transporter 3, mitochondrial (CAT3) from Arabidopsis thaliana (Mouse-ear cress).